Consider the following 158-residue polypeptide: Endoribonuclease YbeY (158 aa).

3 residues coordinate Zn(2+): His-118, His-122, and His-128.

This sequence belongs to the endoribonuclease YbeY family. Zn(2+) serves as cofactor.

The protein localises to the cytoplasm. In terms of biological role, single strand-specific metallo-endoribonuclease involved in late-stage 70S ribosome quality control and in maturation of the 3' terminus of the 16S rRNA. The chain is Endoribonuclease YbeY from Haemophilus ducreyi (strain 35000HP / ATCC 700724).